Here is a 522-residue protein sequence, read N- to C-terminus: TNF receptor-associated factor 6 (522 aa).

The tract at residues methionine 1 to isoleucine 354 is interaction with TAX1BP1. The RING-type zinc finger occupies cysteine 70–asparagine 109. Lysine 124 participates in a covalent cross-link: Glycyl lysine isopeptide (Lys-Gly) (interchain with G-Cter in SUMO); alternate. Lysine 124 is covalently cross-linked (Glycyl lysine isopeptide (Lys-Gly) (interchain with G-Cter in ubiquitin); alternate). A Glycyl lysine isopeptide (Lys-Gly) (interchain with G-Cter in SUMO) cross-link involves residue lysine 142. 2 consecutive TRAF-type zinc fingers follow at residues aspartate 150–glutamate 202 and isoleucine 203–alanine 259. A coiled-coil region spans residues tyrosine 288–glutamine 348. Residue lysine 319 forms a Glycyl lysine isopeptide (Lys-Gly) (interchain with G-Cter in ubiquitin) linkage. The region spanning asparagine 350–valine 499 is the MATH domain. Positions tryptophan 355–valine 522 are interaction with TANK. A Glycyl lysine isopeptide (Lys-Gly) (interchain with G-Cter in SUMO) cross-link involves residue lysine 453.

The protein belongs to the TNF receptor-associated factor family. A subfamily. In terms of assembly, homotrimer. Homooligomer. N-terminal region is dimeric while C-terminal region is trimeric; maybe providing a mode of oligomerization. Upon IL1B treatment, forms a complex with PELI1, IRAK1, IRAK4 and MYD88; this complex recruits MAP3K7/TAK1, TAB1 and TAB2 to mediate NF-kappa-B activation. Direct binding of SMAD6 to PELI1 prevents the complex formation and hence negatively regulates IL1R-TLR signaling and eventually NF-kappa-B-mediated gene expression. Binds to TNFRSF5/CD40 and TNFRSF11A/RANK. Associates with NGFR, TNFRSF17, IRAK2, IRAK3, RIPK2, MAP3K1, MAP3K5, MAP3K14, CSK, TRAF, TRAF-interacting protein TRIP and TNF receptor associated protein TDP2. Interacts with IL17R. Interacts with SQSTM1 bridging NTRK1 and NGFR. Forms a ternary complex with SQSTM1 and PRKCZ. Interacts with PELI2 and PELI3. Binds UBE2V1. Interacts with TAX1BP1; this interaction mediates deubiquitination of TRAF6 and inhibition of NF-kappa-B activation. Interacts with ZNF675. Interacts with ARRB1 and ARRB2. Interacts with MAP3K7 and TAB1/MAP3K7IP1; during IL-1 signaling. Interacts with UBE2N. Interacts with TGFBR1, HDAC1 and RANGAP1. Interacts with AKT1, AKT2 and AKT3. Interacts (via TRAF domains) with NUMBL (via C-terminal). Interacts with RBCK1. Interacts with LIMD1 (via LIM domains). Interacts with RSAD2/viperin. Interacts (via C-terminus) with EIF2AK2/PKR (via the kinase catalytic domain). Interacts with ZFAND5. Interacts with IL1RL1. Interacts with TRAFD1. Interacts with AJUBA. Interacts with MAVS/IPS1. Interacts (via TRAF domains) with DYNC2I2 (via WD domains). Interacts with IFIT3 (via N-terminus). Interacts with TICAM2. Interacts with CARD14. Interacts with CD40 and MAP3K8; the interaction is required for ERK activation. Interacts with TICAM1 and this interaction is enhanced in the presence of WDFY1. Interacts with TANK; this interaction increases in response to DNA damage. Interacts with USP10; this interaction increases in response to DNA damage. Interacts with ZC3H12A; this interaction increases in response to DNA damage and is stimulated by TANK. Interacts with WDFY3. Interacts with TRIM13. Interacts with GPS2. Interacts (via C-terminus) with SASH1. Interacts with LRRC19. Interacts with IL17RA and TRAF3IP2. Interacts with TOMM70. Interacts with AMBRA1; interaction is required to mediate 'Lys-63'-linked ubiquitination of ULK1. Interacts with CRBN; this interaction inhibits TLR4-mediated signaling by preventing TRAF6-mediated ubiquitination of ECSIT. Sumoylated on Lys-124, Lys-142 and Lys-453 with SUMO1. In terms of processing, polyubiquitinated on Lys-124 by TRAF3IP2; after cell stimulation with IL17A. Polyubiquitinated on Lys-124; after cell stimulation with IL1B or TGFB. This ligand-induced cell stimulation leads to dimerization/oligomerization of TRAF6 molecules, followed by auto-ubiquitination which involves UBE2N and UBE2V1 and leads to TRAF6 activation. This 'Lys-63' site-specific poly-ubiquitination appears to be associated with the activation of signaling molecules. Endogenous autoubiquitination occurs only for the cytoplasmic form. Deubiquitinated by USP10 in a TANK-dependent manner, leading to the negative regulation of NF-kappaB signaling upon DNA damage. LRRC19 induces 'Lys-63' ubiquitination. Ubiquitinated at Lys-319 by the SCF(FBXL2) complex, leading to its degradation by the proteasome. Post-translationally, (Microbial infection) Deubiquitinated by Epstein-Barr virus BPLF1 on both 'Lys-48' and 'Lys-63'-linked ubiquitin chains; leading to NF-kappa-B signaling inhibition. As to expression, expressed in heart, brain, placenta, lung, liver, skeletal muscle, kidney and pancreas.

It is found in the cytoplasm. Its subcellular location is the cell cortex. It localises to the nucleus. The protein localises to the lipid droplet. It catalyses the reaction S-ubiquitinyl-[E2 ubiquitin-conjugating enzyme]-L-cysteine + [acceptor protein]-L-lysine = [E2 ubiquitin-conjugating enzyme]-L-cysteine + N(6)-ubiquitinyl-[acceptor protein]-L-lysine.. Its pathway is protein modification; protein ubiquitination. Functionally, E3 ubiquitin ligase that, together with UBE2N and UBE2V1, mediates the synthesis of 'Lys-63'-linked-polyubiquitin chains conjugated to proteins, such as ECSIT, IKBKG, IRAK1, AKT1 and AKT2. Also mediates ubiquitination of free/unanchored polyubiquitin chain that leads to MAP3K7 activation. Leads to the activation of NF-kappa-B and JUN. Seems to also play a role in dendritic cells (DCs) maturation and/or activation. Represses c-Myb-mediated transactivation, in B-lymphocytes. Adapter protein that seems to play a role in signal transduction initiated via TNF receptor, IL-1 receptor and IL-17 receptor. Regulates osteoclast differentiation by mediating the activation of adapter protein complex 1 (AP-1) and NF-kappa-B, in response to RANK-L stimulation. Together with MAP3K8, mediates CD40 signals that activate ERK in B-cells and macrophages, and thus may play a role in the regulation of immunoglobulin production. Acts as a regulator of the JNK and NF-kappa-B signaling pathways by initiating assembly of heterotypic 'Lys-63'-/'Lys-48'-linked branched ubiquitin chains that are then recognized by TAB2: TRAF6 catalyzes initial 'Lys-63'-linked-polyubiquitin chains that are then branched via 'Lys-48'-linked polyubiquitin by HUWE1. 'Lys-63'-/'Lys-48'-linked branched ubiquitin chains protect 'Lys-63'-linkages from CYLD deubiquitination. Participates also in the TCR signaling by ubiquitinating LAT. This is TNF receptor-associated factor 6 (TRAF6) from Homo sapiens (Human).